The chain runs to 330 residues: Clavaminate synthase-like protein At3g21360 (330 aa).

Ala2 carries the N-acetylalanine modification. Residues His120, Glu122, and His313 each coordinate Fe cation.

Fe cation is required as a cofactor.

The chain is Clavaminate synthase-like protein At3g21360 from Arabidopsis thaliana (Mouse-ear cress).